Consider the following 434-residue polypeptide: 26S proteasome regulatory subunit RPN6 (434 aa).

N-acetylserine is present on Ser-2. The region spanning 235–404 is the PCI domain; it reads AFSYFFESFE…GWLYVYETPN (170 aa).

The protein belongs to the proteasome subunit S9 family. In terms of assembly, component of the lid subcomplex of the 19S proteasome regulatory particle complex (also named PA700 complex). The 26S proteasome consists of a 20S proteasome core and two 19S regulatory subunits. N-acetylated by NAT1.

Functionally, component of the lid subcomplex of the 26S proteasome, a multiprotein complex involved in the ATP-dependent degradation of ubiquitinated proteins. In the complex, RPN6 is required for proteasome assembly. This chain is 26S proteasome regulatory subunit RPN6 (RPN6), found in Saccharomyces cerevisiae (strain ATCC 204508 / S288c) (Baker's yeast).